Here is a 948-residue protein sequence, read N- to C-terminus: Putative helicase 009L (948 aa).

The Helicase ATP-binding domain occupies 64 to 243 (LSEDTPYREL…ADVLNLILPQ (180 aa)). 77 to 84 (HAPGTGKT) serves as a coordination point for ATP. Residues 187-190 (DEVH) carry the DEAH box motif. The Helicase C-terminal domain occupies 371–554 (VKYDYLVRVA…AVERILMTSA (184 aa)).

The protein is Putative helicase 009L of Frog virus 3 (isolate Goorha) (FV-3).